The sequence spans 4699 residues: PKS-NRPS hybrid synthetase cheA (4699 aa).

A compositionally biased stretch (acidic residues) spans 1–21 (MSDNDDEWNGFSDDNGEDDGP). Disordered stretches follow at residues 1-38 (MSDN…WDVP) and 136-165 (DGWR…HTQH). Basic and acidic residues predominate over residues 136 to 148 (DGWRFHSHPDPQH). An N-terminal acylcarrier protein transacylase domain (SAT) region spans residues 172–520 (SLDTIAELSN…VQQNVEEMAK (349 aa)). Residues 625–836 (PLPSVEDNVA…AGAPGARVTR (212 aa)) are disordered. Over residues 674 to 688 (TQGSQGSQGRRTPGS) the composition is skewed to low complexity. Positions 724–737 (PKRRGRPPGSKNKK) are enriched in basic residues. Residues 737 to 1138 (KKDQAPAPAE…GANAHAILEA (402 aa)) enclose the Ketosynthase family 3 (KS3) domain. Over residues 764–777 (ASAPRRGLRAAPAA) the composition is skewed to low complexity. Polar residues predominate over residues 802–816 (ATASTPRAQSDQGTG). Active-site for beta-ketoacyl synthase activity residues include C873, H1012, and H1058. The segment at 1250-1573 (VFTGQGAQWP…VGTLLRQRDA (324 aa)) is malonyl-CoA:ACP transacylase (MAT) domain. The interval 1644–1777 (NELLGTRIMD…ANLIISLGEP (134 aa)) is N-terminal hotdog fold. Residues 1644 to 1947 (NELLGTRIMD…TKPLVPPTPS (304 aa)) form the PKS/mFAS DH domain. The tract at residues 1645–1941 (ELLGTRIMDN…QLQGLHTKPL (297 aa)) is dehydratase (DH) domain. The Proton acceptor; for dehydratase activity role is filled by H1676. Residues 1794–1947 (MLDVPAERFY…TKPLVPPTPS (154 aa)) are C-terminal hotdog fold. D1854 serves as the catalytic Proton donor; for dehydratase activity. The methyltransferase (MT) domain stretch occupies residues 2050-2241 (LNRFYIEALG…RNTGFSGADE (192 aa)). The segment at 2794 to 2967 (TYWLVGLTGG…PAAAVNIGAV (174 aa)) is ketoreductase (KR) domain. One can recognise a Carrier 1 domain in the interval 3076–3153 (DASEILEDAY…ALFELVKERA (78 aa)). At S3113 the chain carries O-(pantetheine 4'-phosphoryl)serine. Positions 3164-3265 (EQPDQVKSPR…PVASSPDAGL (102 aa)) are disordered. Polar residues-rich tracts occupy residues 3200–3209 (SLDQGSSWDS) and 3218–3233 (GHDS…SSPI). Residues 3268-3696 (SVPLSFSQAR…PISRISKPPL (429 aa)) form a condensation (C) domain region. Residues 3730–4113 (IQAHPDKLAL…GGLILEGRID (384 aa)) are adenylation (A) domain. Positions 4236-4316 (EGLPAMQHLI…TMAALVASGS (81 aa)) constitute a Carrier 2 domain. The segment at 4241 to 4313 (MQHLIKQLWE…TLETMAALVA (73 aa)) is thiolation and peptide carrier (T) domain. Position 4276 is an O-(pantetheine 4'-phosphoryl)serine (S4276). The segment at 4367 to 4598 (LTGSTGFLGR…ISVHTVAAAI (232 aa)) is reductase (R) domain.

This sequence in the C-terminal section; belongs to the NRP synthetase family.

The protein operates within secondary metabolite biosynthesis. Functionally, PKS-NRPS hybrid synthetase; part of the gene cluster that mediates the biosynthesis of chaetoglobosin A which has a unique inhibitory activity against actin polymerization in mammalian cells. Chaetoglobosin A and its intermediates are involved in the morphological differentiation of C.globosum. The first step of the pathway is the synthesis of prochaetoglobosin I via condensation of one acetyl-CoA, 8 malonyl-CoA, and a L-tryptophan molecule by the PKS-NRPS hybrid synthetase cheA, followed by reduction of backbone double bond to install desired geometry by the enoyl reductase cheB. Further multiple oxidation steps performed by the cytochrome P450 monooxygenases cheE and cheG, as well as by the FAD-linked oxidoreductase cheF, lead to the formation of chaetoglobosin A. Depending on the order of action of these reductases, distinct intermediates can be identified. Within the pathway, the cytochrome P450 monooxygenase cheE catalyzes a stereospecific epoxidation on prochaetoglobosin I, cytoglobosin D, and chaetoglobosin J intermediates. The FAD-linked oxidoreductase cheF performs dehydrogenation of the C-20 hydroxyl groups in the 20-dihyrochaetoglobosin A and cytoglobosin D intermediates. Finally, the cytochrome P450 monooxygenase cheG can catalyze the stereospecific dihydroxylation of prochaetoglobosin I and prochaetoglobosin IV at C-19 and C-20, respectively. The Diels-Alderase cheD may play a role in the post-PKS-NRPS biosynthetic steps catalyzing Diels-Alder cyclization. The polypeptide is PKS-NRPS hybrid synthetase cheA (Chaetomium globosum (strain ATCC 6205 / CBS 148.51 / DSM 1962 / NBRC 6347 / NRRL 1970) (Soil fungus)).